The following is an 89-amino-acid chain: Small ribosomal subunit protein uS15 (89 aa).

This sequence belongs to the universal ribosomal protein uS15 family. As to quaternary structure, part of the 30S ribosomal subunit. Forms a bridge to the 50S subunit in the 70S ribosome, contacting the 23S rRNA.

In terms of biological role, one of the primary rRNA binding proteins, it binds directly to 16S rRNA where it helps nucleate assembly of the platform of the 30S subunit by binding and bridging several RNA helices of the 16S rRNA. Forms an intersubunit bridge (bridge B4) with the 23S rRNA of the 50S subunit in the ribosome. This chain is Small ribosomal subunit protein uS15, found in Anaeromyxobacter sp. (strain Fw109-5).